We begin with the raw amino-acid sequence, 206 residues long: Threonine efflux protein (206 aa).

A helical membrane pass occupies residues 1–21 (MLMLFLTVAMVHIVALMSPGP). The Periplasmic segment spans residues 22–43 (DFFFVSQTAVSRSRKEAMMGVL). A helical transmembrane segment spans residues 44-64 (GITCGVMVWAGIALLGLHLII). Topologically, residues 65-66 (EK) are cytoplasmic. A helical membrane pass occupies residues 67–87 (MAWLHTLIMVGGGLYLCWMGY). The Periplasmic portion of the chain corresponds to 88–149 (QMLRGALKKE…VGDNVGTTAR (62 aa)). A helical membrane pass occupies residues 150–173 (WGIFALIIVETLAWFTVVASLFAL). Topologically, residues 174 to 206 (PQMRRGYQRLAKWIDGFAGALFAGFGIHLIISR) are cytoplasmic.

The protein belongs to the Rht family.

It localises to the cell inner membrane. Its function is as follows. Conducts the efflux of threonine. The protein is Threonine efflux protein (rhtC) of Escherichia coli O157:H7.